The following is a 248-amino-acid chain: 23S rRNA (guanosine(2553)-2'-O)-methyltransferase RlmP (248 aa).

S-adenosyl-L-methionine-binding residues include arginine 123, glycine 204, valine 224, and leucine 233.

The protein belongs to the class IV-like SAM-binding methyltransferase superfamily. RNA methyltransferase TrmH family. In terms of assembly, homodimer.

It localises to the cytoplasm. It carries out the reaction guanosine(2553) in 23S rRNA + S-adenosyl-L-methionine = 2'-O-methylguanosine(2553) in 23S rRNA + S-adenosyl-L-homocysteine + H(+). In terms of biological role, specifically methylates the ribose of guanosine 2553 (G2553) in 23S rRNA. When the target G2553 is mutated, is able to methylate the ribose of adenosine, but it cannot methylate cytidine nor uridine. Modifies free 23S rRNA but not the fully assembled ribosome nor the 50S subunit, suggesting that the modification occurs early during ribosome biogenesis. This is 23S rRNA (guanosine(2553)-2'-O)-methyltransferase RlmP from Bacillus subtilis (strain 168).